A 517-amino-acid polypeptide reads, in one-letter code: Serine carboxypeptidase ctsa-3.2 (517 aa).

An N-terminal signal peptide occupies residues 1-21 (MWWTSLVFSVLLFDLIFISNC). The active site involves Ser-172. N-linked (GlcNAc...) asparagine glycosylation is present at Asn-269. Residues Asp-418 and His-485 contribute to the active site.

The protein belongs to the peptidase S10 family.

In Caenorhabditis elegans, this protein is Serine carboxypeptidase ctsa-3.2.